Here is a 554-residue protein sequence, read N- to C-terminus: Formate--tetrahydrofolate ligase (554 aa).

Residue threonine 65 to threonine 72 coordinates ATP.

The protein belongs to the formate--tetrahydrofolate ligase family.

It carries out the reaction (6S)-5,6,7,8-tetrahydrofolate + formate + ATP = (6R)-10-formyltetrahydrofolate + ADP + phosphate. It participates in one-carbon metabolism; tetrahydrofolate interconversion. The protein is Formate--tetrahydrofolate ligase of Petrotoga mobilis (strain DSM 10674 / SJ95).